A 366-amino-acid polypeptide reads, in one-letter code: Terpene cyclase atmA (366 aa).

Helical transmembrane passes span 9–29 (FLLL…NNGF), 84–104 (LTGL…VVHI), 113–133 (GMVI…GIVI), 162–182 (GLVV…SLPA), 195–215 (IAAW…HHLF), 233–253 (VYHF…SAFV), 291–311 (AGLF…TMVW), and 333–353 (ILRL…VRLI).

This sequence belongs to the membrane-bound ascI terpene cyclase family.

The protein localises to the membrane. Its function is as follows. Aflatrem synthesis protein A; part of the ATM2 gene cluster that mediates the biosynthesis of aflatrem, a tremorgenic mycotoxin with acute neurotoxic effects. Synthesis of geranylgeranyl diphosphate (GGPP) by AtmG (a GGPP synthase) precedes condensation of GGPP with indole 3-glycerol phosphate, followed by epoxidation and cyclization by AtmM (a FAD-dependent monooxygenase) and AtmC (a prenyltransferase) to produce paspaline. AtmB is also essential for paspaline production, but its exact role has not been identified yet. AtmP, a cytochrome P450 monooxygenase, subsequently converts paspaline to 13-desoxypaxilline via PC-M6 by removal of the C-30 methyl group and oxidation at C-10. AtmQ, a cytochrome P450 monooxygenase, then catalyzes the oxidation of 13-desoxypaxilline, first at C-7 to produce paspalicine and then at C-13 to form paspalinine. Finally, AtmD prenylates paspalinine to form aflatrem. The role of atmA in the aflatrem biosynthesis is still unknown. This chain is Terpene cyclase atmA, found in Aspergillus flavus.